Here is a 533-residue protein sequence, read N- to C-terminus: Histone-arginine methyltransferase CARMER (533 aa).

Residues 143-452 (ASQYFQFYGY…QSYDVTIDLH (310 aa)) enclose the SAM-dependent MTase PRMT-type domain. S-adenosyl-L-methionine contacts are provided by Gln-156, Arg-165, Gly-189, Glu-211, Glu-240, and Thr-268. Arg-503 bears the Asymmetric dimethylarginine; by autocatalysis mark.

The protein belongs to the class I-like SAM-binding methyltransferase superfamily. Protein arginine N-methyltransferase family. Homodimer. In terms of processing, the dimethylated protein is the major form.

It is found in the cytoplasm. Its subcellular location is the nucleus. The enzyme catalyses L-arginyl-[protein] + 2 S-adenosyl-L-methionine = N(omega),N(omega)-dimethyl-L-arginyl-[protein] + 2 S-adenosyl-L-homocysteine + 2 H(+). Methylates (mono- and asymmetric dimethylation) the guanidino nitrogens of arginyl residues in proteins. May methylate histone H3 at 'Arg-17' and activate transcription via chromatin remodeling. This is Histone-arginine methyltransferase CARMER (Art4) from Drosophila willistoni (Fruit fly).